Consider the following 550-residue polypeptide: Hydroxylamine reductase (550 aa).

Cysteine 3, cysteine 6, cysteine 18, and cysteine 25 together coordinate [2Fe-2S] cluster. Hybrid [4Fe-2O-2S] cluster contacts are provided by histidine 249, glutamate 273, cysteine 317, cysteine 405, cysteine 433, cysteine 458, glutamate 492, and lysine 494. Cysteine persulfide is present on cysteine 405.

The protein belongs to the HCP family. It depends on [2Fe-2S] cluster as a cofactor. Requires hybrid [4Fe-2O-2S] cluster as cofactor.

Its subcellular location is the cytoplasm. The enzyme catalyses A + NH4(+) + H2O = hydroxylamine + AH2 + H(+). Its function is as follows. Catalyzes the reduction of hydroxylamine to form NH(3) and H(2)O. This Salmonella gallinarum (strain 287/91 / NCTC 13346) protein is Hydroxylamine reductase.